The primary structure comprises 110 residues: MDIGRAVRFLRKRQGWTQQQLADFSHTSKSNISNLENGNQGYSPAILEYLAKAFNCSVSQIFLLAENMDNEGNLLKDWQHMPIDVLFIQLPQEVQCQLKHLIFTLIDTKK.

In terms of domain architecture, HTH cro/C1-type spans 7 to 61; that stretch reads VRFLRKRQGWTQQQLADFSHTSKSNISNLENGNQGYSPAILEYLAKAFNCSVSQI. The segment at residues 18–37 is a DNA-binding region (H-T-H motif); it reads QQQLADFSHTSKSNISNLEN.

Represses transcription of the PilB-specific inhibitory protein CpiA. In Acinetobacter baylyi (strain ATCC 33305 / BD413 / ADP1), this protein is Competence pilus inhibition repressor.